The primary structure comprises 144 residues: Large ribosomal subunit protein uL16 (144 aa).

It belongs to the universal ribosomal protein uL16 family. In terms of assembly, part of the 50S ribosomal subunit.

Functionally, binds 23S rRNA and is also seen to make contacts with the A and possibly P site tRNAs. This Bacillus cereus (strain ATCC 10987 / NRS 248) protein is Large ribosomal subunit protein uL16.